The sequence spans 465 residues: NADH-quinone oxidoreductase subunit N (465 aa).

13 helical membrane-spanning segments follow: residues 6-26 (ILPE…GIVF), 30-50 (TINL…ILSA), 66-86 (LYIR…LLLL), 98-118 (SILI…NNLI), 156-176 (ALSS…TGLV), 194-214 (IVFG…IAPF), 226-246 (PTIV…TFLI), 261-281 (FQPV…FGAL), 289-309 (LLAY…SIFT), 317-337 (LIYL…FIQI), 363-383 (ILLF…KLFI), 391-411 (GFIG…YYYL), and 432-452 (SLFI…MCVE).

The protein belongs to the complex I subunit 2 family. As to quaternary structure, NDH-1 is composed of 14 different subunits. Subunits NuoA, H, J, K, L, M, N constitute the membrane sector of the complex.

The protein resides in the cell membrane. It catalyses the reaction a quinone + NADH + 5 H(+)(in) = a quinol + NAD(+) + 4 H(+)(out). In terms of biological role, NDH-1 shuttles electrons from NADH, via FMN and iron-sulfur (Fe-S) centers, to quinones in the respiratory chain. The immediate electron acceptor for the enzyme in this species is believed to be ubiquinone. Couples the redox reaction to proton translocation (for every two electrons transferred, four hydrogen ions are translocated across the cytoplasmic membrane), and thus conserves the redox energy in a proton gradient. This is NADH-quinone oxidoreductase subunit N from Wolbachia sp. subsp. Brugia malayi (strain TRS).